The primary structure comprises 426 residues: MDNEIVALCGFFVAIALVLSCISIITHLKNYKKPVLQRSVVRILMMIVIYSSVSFLSVYNEKIGSIFEPFREIYEAFALYCFFCLLIDYLGGERAAVISLHGHLPRPRLWPLNYLQDDIDLSDPYTFLSIKRGILQYTWLKPFLVIAVLLTKVTGVYDREDQPVYASADLWIGLVYNISITLSLYSLTTFWVCLHEELAPFRPFPKFLSVKAIIFASYWQQTVLSITNWLGLLNGTGWIYSLLNQNVLMCLEMPFFALSHWYAFRIEDYDTPTWLSCARLPLLKAFKDVIGLKDVWCDSLQTLHGDRYVYQNFEPGENLIPSRNDGRINRTSHGLRYSQGGQSKYWISRYDQSRVRLINNSQNSPQSNKSYFSIPGMSTSHFENGLQFEIDDEMEPLYNQAKQMRYGDYNYPVLLVNNTHASSSYT.

The next 5 helical transmembrane spans lie at 39 to 59 (SVVR…LSVY), 73 to 93 (IYEA…LGGE), 133 to 153 (GILQ…LTKV), 172 to 192 (IGLV…TFWV), and 223 to 243 (VLSI…YSLL). The residue at position 364 (Ser364) is a Phosphoserine. The tract at residues 386–409 (LQFEIDDEMEPLYNQAKQMRYGDY) is ATG8-interacting region.

The protein belongs to the TMEM184 family. As to quaternary structure, interacts with atg8.

Its subcellular location is the vacuole membrane. Vacuole membrane protein that recruits ATG8 to facilitate the degradation of vacuolar integral membrane proteins during early-stationary vacuole turnover (EVT) when cells enter stationary phase. This chain is Vacuole membrane protein hfl11, found in Schizosaccharomyces pombe (strain 972 / ATCC 24843) (Fission yeast).